Here is a 608-residue protein sequence, read N- to C-terminus: Alpha-glycerophosphate oxidase (608 aa).

21 to 49 (DLLIIGGGITGAGVALQAAASGLETGLIE) lines the FAD pocket. The disordered stretch occupies residues 393–418 (SAVSKLESSTSEKHLDPSAVSRGSSL).

The protein belongs to the FAD-dependent glycerol-3-phosphate dehydrogenase family. The cofactor is FAD.

The protein resides in the cell membrane. It catalyses the reaction sn-glycerol 3-phosphate + O2 = dihydroxyacetone phosphate + H2O2. It functions in the pathway membrane lipid metabolism; glycerophospholipid metabolism. The protein is Alpha-glycerophosphate oxidase (glpO) of Streptococcus pneumoniae serotype 4 (strain ATCC BAA-334 / TIGR4).